The primary structure comprises 154 residues: uncharacterized protein (154 aa).

The next 4 helical transmembrane spans lie at 15–37, 58–80, 95–116, and 123–145; these read DFSF…ALIT, FAAM…WLWG, LGAL…FAFT, and LVIS…FVPH.

The protein localises to the cell membrane. This is an uncharacterized protein from Archaeoglobus fulgidus (strain ATCC 49558 / DSM 4304 / JCM 9628 / NBRC 100126 / VC-16).